Consider the following 278-residue polypeptide: Probable ribosomal RNA small subunit methyltransferase A (278 aa).

The S-adenosyl-L-methionine site is built by histidine 25, methionine 27, glycine 52, glutamate 73, aspartate 98, and asparagine 114.

It belongs to the class I-like SAM-binding methyltransferase superfamily. rRNA adenine N(6)-methyltransferase family. RsmA subfamily.

The protein resides in the cytoplasm. Functionally, specifically dimethylates two adjacent adenosines in the loop of a conserved hairpin near the 3'-end of 16S rRNA in the 30S particle. May play a critical role in biogenesis of 30S subunits. This Methanopyrus kandleri (strain AV19 / DSM 6324 / JCM 9639 / NBRC 100938) protein is Probable ribosomal RNA small subunit methyltransferase A.